An 891-amino-acid polypeptide reads, in one-letter code: Valine--tRNA ligase (891 aa).

The 'HIGH' region motif lies at 43–53 (PFTSGTLHLGH). The 'KMSKS' region signature appears at 536 to 540 (KMSKS). ATP is bound at residue lysine 539.

Belongs to the class-I aminoacyl-tRNA synthetase family. ValS type 2 subfamily.

It is found in the cytoplasm. It carries out the reaction tRNA(Val) + L-valine + ATP = L-valyl-tRNA(Val) + AMP + diphosphate. In terms of biological role, catalyzes the attachment of valine to tRNA(Val). As ValRS can inadvertently accommodate and process structurally similar amino acids such as threonine, to avoid such errors, it has a 'posttransfer' editing activity that hydrolyzes mischarged Thr-tRNA(Val) in a tRNA-dependent manner. The protein is Valine--tRNA ligase of Pyrococcus furiosus (strain ATCC 43587 / DSM 3638 / JCM 8422 / Vc1).